We begin with the raw amino-acid sequence, 398 residues long: Acetate kinase (398 aa).

Asparagine 8 contributes to the Mg(2+) binding site. Lysine 15 serves as a coordination point for ATP. Arginine 89 contributes to the substrate binding site. The active-site Proton donor/acceptor is aspartate 146. ATP-binding positions include 206–210 (HIGNG), 283–285 (DMR), and 331–335 (GMGEN). Mg(2+) is bound at residue glutamate 383.

The protein belongs to the acetokinase family. As to quaternary structure, homodimer. Mg(2+) serves as cofactor. Mn(2+) is required as a cofactor.

The protein resides in the cytoplasm. It carries out the reaction acetate + ATP = acetyl phosphate + ADP. Its pathway is metabolic intermediate biosynthesis; acetyl-CoA biosynthesis; acetyl-CoA from acetate: step 1/2. Catalyzes the formation of acetyl phosphate from acetate and ATP. Can also catalyze the reverse reaction. The sequence is that of Acetate kinase from Streptococcus pyogenes serotype M28 (strain MGAS6180).